We begin with the raw amino-acid sequence, 148 residues long: Histone H2B.1 (148 aa).

Over residues 1–35 (MAPRAEKKPAEKKTAAERPVEENKAAEKAPAEKKP) the composition is skewed to basic and acidic residues. The interval 1–56 (MAPRAEKKPAEKKTAAERPVEENKAAEKAPAEKKPKAGKKLPPKEAGDKKKKRSKK) is disordered. Position 2 is a n,N,N-trimethylalanine; alternate (A2). A2 carries the n,N-dimethylalanine; alternate modification. A2 bears the N-methylalanine; alternate mark. An N6-acetyllysine; partial modification is found at K7. K12 bears the N6-acetyllysine mark. The residue at position 13 (K13) is an N6,N6-dimethyllysine. An N6-acetyllysine mark is found at K28, K33, and K39. N6-acetyllysine; partial is present on K40. A Glycyl lysine isopeptide (Lys-Gly) (interchain with G-Cter in ubiquitin) cross-link involves residue K144.

The protein belongs to the histone H2B family. As to quaternary structure, the nucleosome is a histone octamer containing two molecules each of H2A, H2B, H3 and H4 assembled in one H3-H4 heterotetramer and two H2A-H2B heterodimers. The octamer wraps approximately 147 bp of DNA. Interacts with AHL27. In terms of processing, can be acetylated to form H2BK6ac, H2BK33ac and H2BK34ac. Post-translationally, mono-, di- or trimethylated at the N-terminus to form H2BA1me1/2/3. H2BA1me2 may be acetylated to form H2BA1me2K6ac. Monoubiquitinated by BRE1 to form H2BK143ub1 and deubiquitinated by UBP26. Required for heterochromatic histone H3 di- and trimethylation at H3K4me. May give a specific tag for epigenetic transcriptional activation.

The protein resides in the nucleus. Its subcellular location is the chromosome. In terms of biological role, core component of nucleosome. Nucleosomes wrap and compact DNA into chromatin, limiting DNA accessibility to the cellular machineries which require DNA as a template. Histones thereby play a central role in transcription regulation, DNA repair, DNA replication and chromosomal stability. DNA accessibility is regulated via a complex set of post-translational modifications of histones, also called histone code, and nucleosome remodeling. This Arabidopsis thaliana (Mouse-ear cress) protein is Histone H2B.1.